An 868-amino-acid chain; its full sequence is Paladin (868 aa).

The N-myristoyl glycine moiety is linked to residue glycine 2.

The protein belongs to the paladin family.

The protein resides in the cytoplasm. It is found in the cytosol. This Gallus gallus (Chicken) protein is Paladin (PALD1).